We begin with the raw amino-acid sequence, 461 residues long: D-phenylhydantoinase (461 aa).

Positions 59, 61, and 151 each coordinate a divalent metal cation. Position 151 is an N6-carboxylysine (Lys-151). Residue Tyr-156 participates in substrate binding. Positions 182 and 239 each coordinate a divalent metal cation. Ser-286 contacts substrate. Asp-313 serves as a coordination point for a divalent metal cation. Residue Asn-335 participates in substrate binding.

Belongs to the metallo-dependent hydrolases superfamily. Hydantoinase/dihydropyrimidinase family. Homotetramer. A divalent metal cation serves as cofactor. In terms of processing, carboxylation allows a single lysine to coordinate two divalent metal cations.

The catalysed reaction is D-5-phenylhydantoin + H2O = N-carbamoyl-D-phenylglycine + H(+). Functionally, catalyzes the stereospecific hydrolysis of the cyclic amide bond of D-hydantoin derivatives with an aromatic side chains at the 5'-position. Has no activity on dihydropyrimidines. The physiological function is unknown. This chain is D-phenylhydantoinase, found in Escherichia coli O6:K15:H31 (strain 536 / UPEC).